The following is an 838-amino-acid chain: Periplasmic nitrate reductase (838 aa).

A signal peptide (tat-type signal) is located at residues 1–29; that stretch reads MDMSRRTLLKAQAAAAAAAVAGIDLPAEA. Residues 40–96 form the 4Fe-4S Mo/W bis-MGD-type domain; that stretch reads LKWSKAPCRFCGTGCGVMVGVKDGRVVATHGDMQAEVNRGLNCVKGYFLSKIMYGAD. Residues C47, C50, C54, and C82 each coordinate [4Fe-4S] cluster. Residues K84, Q151, N176, C180, 213-220, 244-248, 263-265, M374, Q378, N484, 510-511, K533, D560, and 720-729 contribute to the Mo-bis(molybdopterin guanine dinucleotide) site; these read WGSNMAEM, STYEH, GTD, SD, and TGRVLEHWHS. Position 796 (F796) interacts with substrate. The Mo-bis(molybdopterin guanine dinucleotide) site is built by N804 and K821.

Belongs to the prokaryotic molybdopterin-containing oxidoreductase family. NasA/NapA/NarB subfamily. In terms of assembly, component of the periplasmic nitrate reductase NapAB complex composed of NapA and NapB. [4Fe-4S] cluster is required as a cofactor. Requires Mo-bis(molybdopterin guanine dinucleotide) as cofactor. Predicted to be exported by the Tat system. The position of the signal peptide cleavage has not been experimentally proven.

It localises to the periplasm. The enzyme catalyses 2 Fe(II)-[cytochrome] + nitrate + 2 H(+) = 2 Fe(III)-[cytochrome] + nitrite + H2O. Functionally, catalytic subunit of the periplasmic nitrate reductase complex NapAB. Receives electrons from NapB and catalyzes the reduction of nitrate to nitrite. This chain is Periplasmic nitrate reductase, found in Methylobacterium sp. (strain 4-46).